The following is a 313-amino-acid chain: Olfactory receptor 2B6 (313 aa).

Residues 1-27 (MSWANESITGEFVLLGFSDQPWLEFPL) lie on the Extracellular side of the membrane. N5 carries an N-linked (GlcNAc...) asparagine glycan. A helical transmembrane segment spans residues 28–48 (FVVFLTSYIVTIFGNLNIILV). Topologically, residues 49 to 57 (SHLDPKLHT) are cytoplasmic. Residues 58–78 (PMYFFLTNLSVIDLCYITCTV) traverse the membrane as a helical segment. Residues 79–97 (PQMLVNLRSIRKVISFGGC) are Extracellular-facing. C97 and C189 are oxidised to a cystine. Residues 98-118 (VVQLFMFLALGATECVLLPVM) form a helical membrane-spanning segment. At 119–143 (SFDRFVAICRPLHYSVIMHQRLCLQ) the chain is on the cytoplasmic side. The helical transmembrane segment at 144–164 (LAAVSWIIGFGNSVWLSILTL) threads the bilayer. At 165-200 (QLPRCGHYVIDHFLCEVPALLKLSCVDVTANEAELF) the chain is on the extracellular side. Residues 201–221 (FVSVFFHLTPLSLILTSYAFI) form a helical membrane-spanning segment. The Cytoplasmic portion of the chain corresponds to 222-244 (ARAILKIQSAEGRQKAFGTCSSH). Residues 245–265 (LIVVSLFYGTALSVYFLPPSP) traverse the membrane as a helical segment. Residues 266-271 (HSKNRR) lie on the Extracellular side of the membrane. The helical transmembrane segment at 272-292 (KMVPLFYGIIAPMLNPLIYTL) threads the bilayer. Topologically, residues 293 to 313 (RNKEVKDAFKRLIKRVFLSKN) are cytoplasmic.

This sequence belongs to the G-protein coupled receptor 1 family.

It is found in the cell membrane. Its function is as follows. Odorant receptor. In Mus musculus (Mouse), this protein is Olfactory receptor 2B6.